The following is a 476-amino-acid chain: Serine/threonine-protein kinase sax-1 (476 aa).

The 295-residue stretch at 87–381 (FESLKVIGRG…LDEIKQCPFV (295 aa)) folds into the Protein kinase domain. ATP is bound by residues 93-101 (IGRGAFGEV) and Lys-116. The active-site Proton acceptor is Asp-210. The AGC-kinase C-terminal domain occupies 382-452 (KRIDWNHIRE…KRFDGLTQKM (71 aa)).

This sequence belongs to the protein kinase superfamily. AGC Ser/Thr protein kinase family. Mg(2+) serves as cofactor. Widely expressed in embryonic and larval neurons that contribute axons to the nerve ring and in hypodermal cells, including lateral seam cells. Also displays a punctate localization in muscle.

It is found in the cytoplasm. Its subcellular location is the nucleus. The enzyme catalyses L-seryl-[protein] + ATP = O-phospho-L-seryl-[protein] + ADP + H(+). The catalysed reaction is L-threonyl-[protein] + ATP = O-phospho-L-threonyl-[protein] + ADP + H(+). Acts with sax-2 to restrict the growth of both primary and secondary neurites. Regulates mechanosensory tiling by controlling the termination point of sensory dendrites. The polypeptide is Serine/threonine-protein kinase sax-1 (Caenorhabditis elegans).